Reading from the N-terminus, the 328-residue chain is Arabinose 5-phosphate isomerase KdsD (328 aa).

One can recognise an SIS domain in the interval 41 to 184 (ACEKMFNCTG…AVALLKARGF (144 aa)). Residues 75-76 (GT), H82, H88, 114-123 (ALIPVLKRLH), and 148-150 (KVP) contribute to the substrate site. H82 is a binding site for Zn(2+). A CBS 1 domain is found at 210–268 (MHTGDEIPHVNKHATLRDALLEITRKNLGMTVICDESMKIDGIFTDGDLRRMFDMGGDM). E275 lines the substrate pocket. The region spanning 277–328 (MTPGGIRVRPGILAVDALNLMQSRHITSVLVADGDQLLGVLHMHDLLRAGVV) is the CBS 2 domain.

It belongs to the SIS family. GutQ/KpsF subfamily. In terms of assembly, homotetramer.

The catalysed reaction is D-arabinose 5-phosphate = D-ribulose 5-phosphate. Its pathway is carbohydrate biosynthesis; 3-deoxy-D-manno-octulosonate biosynthesis; 3-deoxy-D-manno-octulosonate from D-ribulose 5-phosphate: step 1/3. It participates in bacterial outer membrane biogenesis; lipopolysaccharide biosynthesis. Its function is as follows. Involved in the biosynthesis of 3-deoxy-D-manno-octulosonate (KDO), a unique 8-carbon sugar component of lipopolysaccharides (LPSs). Catalyzes the reversible aldol-ketol isomerization between D-ribulose 5-phosphate (Ru5P) and D-arabinose 5-phosphate (A5P). This chain is Arabinose 5-phosphate isomerase KdsD (kdsD), found in Salmonella typhi.